Reading from the N-terminus, the 438-residue chain is Putative pectate lyase 14 (438 aa).

An N-terminal signal peptide occupies residues 1-26 (MVVARTLFSISATLIIFLALFLHVNA). Asn-40, Asn-46, and Asn-73 each carry an N-linked (GlcNAc...) asparagine glycan. Ca(2+) contacts are provided by Asp-236, Asp-260, and Asp-264. Residue Arg-316 is part of the active site.

The protein belongs to the polysaccharide lyase 1 family. The cofactor is Ca(2+).

It catalyses the reaction Eliminative cleavage of (1-&gt;4)-alpha-D-galacturonan to give oligosaccharides with 4-deoxy-alpha-D-galact-4-enuronosyl groups at their non-reducing ends.. It participates in glycan metabolism; pectin degradation; 2-dehydro-3-deoxy-D-gluconate from pectin: step 2/5. The polypeptide is Putative pectate lyase 14 (Arabidopsis thaliana (Mouse-ear cress)).